We begin with the raw amino-acid sequence, 231 residues long: Two-component response regulator ARR3 (231 aa).

The Response regulatory domain maps to 34-161 (HVLAVDDSLV…DVKRLRSYLT (128 aa)). A 4-aspartylphosphate modification is found at aspartate 94. The tract at residues 170 to 231 (GNKRKLTTPP…DSPMRSPGLA (62 aa)) is disordered. Positions 185–199 (SATSSMESSDSTVES) are enriched in low complexity. Positions 210 to 221 (LTMSPESATSLV) are enriched in polar residues.

It belongs to the ARR family. Type-A subfamily. Post-translationally, two-component system major event consists of a His-to-Asp phosphorelay between a sensor histidine kinase (HK) and a response regulator (RR). In plants, the His-to-Asp phosphorelay involves an additional intermediate named Histidine-containing phosphotransfer protein (HPt). This multistep phosphorelay consists of a His-Asp-His-Asp sequential transfer of a phosphate group between first a His and an Asp of the HK protein, followed by the transfer to a conserved His of the HPt protein and finally the transfer to an Asp in the receiver domain of the RR protein. Predominantly expressed in roots.

It is found in the nucleus. Functionally, functions as a response regulator involved in His-to-Asp phosphorelay signal transduction system. Phosphorylation of the Asp residue in the receiver domain activates the ability of the protein to promote the transcription of target genes. Type-A response regulators seem to act as negative regulators of the cytokinin signaling. In Arabidopsis thaliana (Mouse-ear cress), this protein is Two-component response regulator ARR3 (ARR3).